The following is a 495-amino-acid chain: MALELFNTLSGKIETFQPLEDNEVRMYACGPTVYDYGHIGNFRTFIVVDTLRRFLKQSGYKLKHVMNVTDVDDKIIRNAARDGKTVQEYTAKYRKAFLEDCEALNIEHPELLVNATDHIDEMARFIKRMEDLDVAYKTEDGSYYFRIAKFPEYGKLSKKDFAGMNDGARVDVDEYEKDNARDFALWKAPKPGEAKWDTVIGSGRPGWHIECSIMSMKYLGESFDIHLGGEDLVFPHHENEIAQSESVTHKKFANFWVHSRFLLVEGQKMSKSLGNFFTVRDLILMGHKPSSIRFLLMSVPYRKQLNFTFDGLKQAAISVDRLRNFKRRIQTEPFAEGTNDKIGLMANETITKIKAALDNDLNTAEALAPIFDLVRDVNAAADAGEVKRGDVASLLEALQKFDEIFAVLNDDDSGKVKFAVDWANQEGKADKISAETAEMAKAAGLSDEKVEALVAEHSAARKAKDFKRSDAIRAELMESGIILENTKDGVRWKRK.

Cys-29 is a binding site for Zn(2+). The 'HIGH' region signature appears at Pro-31–Asn-41. Residues Cys-211, His-236, and Glu-240 each contribute to the Zn(2+) site. A 'KMSKS' region motif is present at residues Lys-268–Ser-272. Residue Lys-271 participates in ATP binding.

It belongs to the class-I aminoacyl-tRNA synthetase family. As to quaternary structure, monomer. Requires Zn(2+) as cofactor.

It localises to the cytoplasm. The catalysed reaction is tRNA(Cys) + L-cysteine + ATP = L-cysteinyl-tRNA(Cys) + AMP + diphosphate. This Koribacter versatilis (strain Ellin345) protein is Cysteine--tRNA ligase.